We begin with the raw amino-acid sequence, 741 residues long: Type VI secretion system spike protein VgrG1b (741 aa).

2 stretches are compositionally biased toward polar residues: residues 614–629 (SIGA…NETI) and 649–663 (GNQS…SRSV). Residues 614–678 (SIGANRSESV…TSVGKDDSLD (65 aa)) form a disordered region.

This sequence belongs to the VgrG protein family.

It is found in the secreted. Its function is as follows. Part of the H1 type VI secretion system (H1-T6SS) specialized secretion system, which delivers several virulence factors in both prokaryotic and eukaryotic cells during infection. Allows the delivery of the Tse7 toxin to target cells where it exerts toxicity through its nuclease domain. The sequence is that of Type VI secretion system spike protein VgrG1b from Pseudomonas aeruginosa (strain ATCC 15692 / DSM 22644 / CIP 104116 / JCM 14847 / LMG 12228 / 1C / PRS 101 / PAO1).